A 215-amino-acid polypeptide reads, in one-letter code: Wtf element wtf7 (215 aa).

A disordered region spans residues 1-21 (MSGSYAPIEDSADELSVHSGN). The next 3 helical transmembrane spans lie at 119 to 139 (LAQSLFLLLPFNFIFFACLFF), 149 to 169 (LMGWILFGIWCLTCFLSSFIL), and 189 to 209 (LILFGLLFPGIVTMVVFYALY).

The protein belongs to the WTF family.

The protein resides in the spore membrane. May act in meiotic drive. The polypeptide is Wtf element wtf7 (Schizosaccharomyces pombe (strain 972 / ATCC 24843) (Fission yeast)).